The sequence spans 290 residues: TP53-target gene 5 protein (290 aa).

Over residues Met-1–Arg-13 the composition is skewed to basic residues. Disordered stretches follow at residues Met-1 to Pro-29 and Lys-114 to Leu-178. Composition is skewed to basic and acidic residues over residues Lys-16 to Thr-26, Lys-114 to Lys-130, and Arg-138 to Ser-167.

Interacts with p53/TP53. Highly expressed in heart, brain and small intestine. Less abundant in skeletal muscle, spleen, prostate, ovary and colon. A smaller transcript is expressed specifically in the testis.

The protein localises to the cytoplasm. The protein resides in the nucleus. May play a significant role in p53/TP53-mediating signaling pathway. This is TP53-target gene 5 protein (TP53TG5) from Homo sapiens (Human).